Here is a 376-residue protein sequence, read N- to C-terminus: 23S rRNA (uracil(747)-C(5))-methyltransferase RlmC (376 aa).

[4Fe-4S] cluster contacts are provided by Cys-3, Cys-11, Cys-14, and Cys-87. S-adenosyl-L-methionine is bound by residues Gln-212, Phe-241, Glu-262, and Asn-307. The Nucleophile role is filled by Cys-334.

It belongs to the class I-like SAM-binding methyltransferase superfamily. RNA M5U methyltransferase family. RlmC subfamily.

The enzyme catalyses uridine(747) in 23S rRNA + S-adenosyl-L-methionine = 5-methyluridine(747) in 23S rRNA + S-adenosyl-L-homocysteine + H(+). Catalyzes the formation of 5-methyl-uridine at position 747 (m5U747) in 23S rRNA. The chain is 23S rRNA (uracil(747)-C(5))-methyltransferase RlmC from Salmonella choleraesuis (strain SC-B67).